A 161-amino-acid chain; its full sequence is Nucleotide-binding protein lpg1167 (161 aa).

This sequence belongs to the YajQ family.

In terms of biological role, nucleotide-binding protein. The polypeptide is Nucleotide-binding protein lpg1167 (Legionella pneumophila subsp. pneumophila (strain Philadelphia 1 / ATCC 33152 / DSM 7513)).